Consider the following 550-residue polypeptide: CTP synthase (550 aa).

The interval 1–272 (MKTKFIFITG…DQKITSFLNL (272 aa)) is amidoligase domain. Ser14 provides a ligand contact to CTP. UTP is bound at residue Ser14. 15–20 (SLGKGL) provides a ligand contact to ATP. Tyr55 serves as a coordination point for L-glutamine. Residue Asp72 coordinates ATP. 2 residues coordinate Mg(2+): Asp72 and Glu146. CTP-binding positions include 153–155 (DIE), 193–198 (KTKPTQ), and Lys229. UTP is bound by residues 193 to 198 (KTKPTQ) and Lys229. A Glutamine amidotransferase type-1 domain is found at 297–550 (TITIVGKYVG…IHAACNHNKQ (254 aa)). Gly359 contacts L-glutamine. The active-site Nucleophile; for glutamine hydrolysis is the Cys386. Residues 387–390 (LGMQ), Glu410, and Arg478 each bind L-glutamine. Catalysis depends on residues His523 and Glu525.

Belongs to the CTP synthase family. As to quaternary structure, homotetramer.

It carries out the reaction UTP + L-glutamine + ATP + H2O = CTP + L-glutamate + ADP + phosphate + 2 H(+). It catalyses the reaction L-glutamine + H2O = L-glutamate + NH4(+). The enzyme catalyses UTP + NH4(+) + ATP = CTP + ADP + phosphate + 2 H(+). It participates in pyrimidine metabolism; CTP biosynthesis via de novo pathway; CTP from UDP: step 2/2. With respect to regulation, allosterically activated by GTP, when glutamine is the substrate; GTP has no effect on the reaction when ammonia is the substrate. The allosteric effector GTP functions by stabilizing the protein conformation that binds the tetrahedral intermediate(s) formed during glutamine hydrolysis. Inhibited by the product CTP, via allosteric rather than competitive inhibition. In terms of biological role, catalyzes the ATP-dependent amination of UTP to CTP with either L-glutamine or ammonia as the source of nitrogen. Regulates intracellular CTP levels through interactions with the four ribonucleotide triphosphates. The polypeptide is CTP synthase (Lawsonia intracellularis (strain PHE/MN1-00)).